The chain runs to 316 residues: Pantothenate kinase (316 aa).

95–102 serves as a coordination point for ATP; the sequence is GSVAVGKS.

It belongs to the prokaryotic pantothenate kinase family.

It localises to the cytoplasm. The catalysed reaction is (R)-pantothenate + ATP = (R)-4'-phosphopantothenate + ADP + H(+). Its pathway is cofactor biosynthesis; coenzyme A biosynthesis; CoA from (R)-pantothenate: step 1/5. This Shewanella baltica (strain OS223) protein is Pantothenate kinase.